A 190-amino-acid polypeptide reads, in one-letter code: Potassium-transporting ATPase KdpC subunit (190 aa).

A helical membrane pass occupies residues 10-30 (TFLFLLLITGGVYPLLTTALG).

The protein belongs to the KdpC family. As to quaternary structure, the system is composed of three essential subunits: KdpA, KdpB and KdpC.

The protein localises to the cell inner membrane. Its function is as follows. Part of the high-affinity ATP-driven potassium transport (or Kdp) system, which catalyzes the hydrolysis of ATP coupled with the electrogenic transport of potassium into the cytoplasm. This subunit acts as a catalytic chaperone that increases the ATP-binding affinity of the ATP-hydrolyzing subunit KdpB by the formation of a transient KdpB/KdpC/ATP ternary complex. This is Potassium-transporting ATPase KdpC subunit from Escherichia coli O45:K1 (strain S88 / ExPEC).